A 588-amino-acid polypeptide reads, in one-letter code: Adenine deaminase (588 aa).

This sequence belongs to the metallo-dependent hydrolases superfamily. Adenine deaminase family. In terms of assembly, homodimer. Mn(2+) is required as a cofactor.

The catalysed reaction is adenine + H2O + H(+) = hypoxanthine + NH4(+). The chain is Adenine deaminase from Shigella sonnei (strain Ss046).